Reading from the N-terminus, the 600-residue chain is Netrin-1 (600 aa).

The signal sequence occupies residues 1–24; the sequence is MMRAMWEALAALAAVSCLVGAVRG. Residues 47–284 form the Laminin N-terminal domain; that stretch reads HPRRCIPDFV…AVSDLQVGGR (238 aa). N-linked (GlcNAc...) asparagine glycans are attached at residues asparagine 95, asparagine 116, and asparagine 131. Intrachain disulfides connect cysteine 119/cysteine 152, cysteine 285/cysteine 294, cysteine 287/cysteine 304, cysteine 306/cysteine 315, cysteine 318/cysteine 338, cysteine 341/cysteine 350, cysteine 343/cysteine 368, cysteine 371/cysteine 380, cysteine 383/cysteine 401, cysteine 404/cysteine 416, cysteine 406/cysteine 423, cysteine 425/cysteine 434, cysteine 437/cysteine 451, and cysteine 472/cysteine 544. Laminin EGF-like domains follow at residues 285-340, 341-403, and 404-453; these read CKCN…ECVA, CNCN…ACKA, and CDCH…PCIK. A glycan (N-linked (GlcNAc...) asparagine) is linked at asparagine 417. The NTR domain occupies 472–600; that stretch reads CDSYCKASKG…KFQQREKKEL (129 aa). The Cell attachment site signature appears at 530-532; it reads RGD.

In terms of assembly, binds to its receptors; DCC, UNC5A, UNC5B, UNC5C and probably UNC5D. Binds to its receptor; DSCAM. Interacts with APP.

It is found in the secreted. It localises to the cytoplasm. In terms of biological role, netrins control guidance of CNS commissural axons and peripheral motor axons. Its association with either DCC or some UNC5 receptors will lead to axon attraction or repulsion, respectively. Binding to UNC5C might cause dissociation of UNC5C from polymerized TUBB3 in microtubules and thereby lead to increased microtubule dynamics and axon repulsion. Involved in dorsal root ganglion axon projection towards the spinal cord. It also serves as a survival factor via its association with its receptors which prevent the initiation of apoptosis. Involved in colorectal tumorigenesis by regulating apoptosis. The sequence is that of Netrin-1 (NTN1) from Sus scrofa (Pig).